The following is a 338-amino-acid chain: Ketol-acid reductoisomerase (NADP(+)) (338 aa).

The region spanning 1–181 is the KARI N-terminal Rossmann domain; sequence MRVFYDKDCD…GGGRTGIIET (181 aa). Residues 24 to 27, Arg47, Ser50, Thr52, and 82 to 85 contribute to the NADP(+) site; these read YGSQ and DEFQ. Residue His107 is part of the active site. Gly133 provides a ligand contact to NADP(+). One can recognise a KARI C-terminal knotted domain in the interval 182–327; the sequence is TFKDETETDL…EKLRAMMPWI (146 aa). Residues Asp190, Glu194, Glu226, and Glu230 each contribute to the Mg(2+) site. A substrate-binding site is contributed by Ser251.

The protein belongs to the ketol-acid reductoisomerase family. The cofactor is Mg(2+).

The catalysed reaction is (2R)-2,3-dihydroxy-3-methylbutanoate + NADP(+) = (2S)-2-acetolactate + NADPH + H(+). It carries out the reaction (2R,3R)-2,3-dihydroxy-3-methylpentanoate + NADP(+) = (S)-2-ethyl-2-hydroxy-3-oxobutanoate + NADPH + H(+). The protein operates within amino-acid biosynthesis; L-isoleucine biosynthesis; L-isoleucine from 2-oxobutanoate: step 2/4. It participates in amino-acid biosynthesis; L-valine biosynthesis; L-valine from pyruvate: step 2/4. Its function is as follows. Involved in the biosynthesis of branched-chain amino acids (BCAA). Catalyzes an alkyl-migration followed by a ketol-acid reduction of (S)-2-acetolactate (S2AL) to yield (R)-2,3-dihydroxy-isovalerate. In the isomerase reaction, S2AL is rearranged via a Mg-dependent methyl migration to produce 3-hydroxy-3-methyl-2-ketobutyrate (HMKB). In the reductase reaction, this 2-ketoacid undergoes a metal-dependent reduction by NADPH to yield (R)-2,3-dihydroxy-isovalerate. In Pseudomonas aeruginosa (strain LESB58), this protein is Ketol-acid reductoisomerase (NADP(+)).